Here is a 209-residue protein sequence, read N- to C-terminus: MLDESPMRKGDSVSNDQSNPESNASVSIHQQNQIITCVSPGPVCPNAIEIKRDIVIVRLRPVESCPGYRFFRRVFETLEKWQLQVDMFSTSLGRITLALGAAALQAGISDSCSARNDMMSRDLMHGMQKLLPDDHIELFPHMAIISVVGHPSRRMAGHIFATMDANDIPTVMISHDAARLGIACAISEQYTAKALCVFEQCLFRYSLTH.

Residues 1–11 (MLDESPMRKGD) show a composition bias toward basic and acidic residues. Positions 1–27 (MLDESPMRKGDSVSNDQSNPESNASVS) are disordered. A compositionally biased stretch (polar residues) spans 12–27 (SVSNDQSNPESNASVS).

This sequence belongs to the aspartokinase family.

It functions in the pathway alkaloid biosynthesis. Aspartokinase-like protein; part of the gene cluster that mediates the biosynthesis of loline alkaloids, potent insecticidal agents composed of a pyrrolizidine ring system and an uncommon ether bridge linking carbons 2 and 7. Lolines are structurally differentiated by the various modifications of the L-amino group and include norloline, loline, N-methylloline, N-acetylloline, N-acetylnorloline, and N-formylloline. The first committed step is the condensation of O-acetyl-L-homoserine (derived from L-aspartic acid) and L-proline, probably catalyzed by the gamma-type pyridoxal 5'-phosphate(PLP)-dependent enzyme lolC, to give the diamino diacid, NACPP. Ensuing cyclization, decarboxylation, and acetylation steps yield 1-exo-acetamidopyrrolizidine (AcAP). LolO is required for installation of the ether bridge upon the pathway intermediate, 1-exo-acetamidopyrrolizidine (AcAP). In sequential 2-oxoglutarate- and O(2)-consuming steps, lolO removes hydrogens from C2 and C7 of AcAP to form both carbon-oxygen bonds in N-acetylnorloline (NANL), the precursor to all other lolines. The enzymes lolD, lolE, lolF and lolT have also been proposed to be involved in the ether-bridge installation. Further processing of the exocyclic moiety of NANL by fungal N-acetamidase (LolN), methyltransferase (LolM), and cytochrome P450 (LolP) enzymes, with occasional involvement of a plant acetyltransferase, generates the other known lolines. LolN transforms NANL to norlonine which is monomethylated and dimethylated to respectively lonine and N-methyllonine (NML) by lolM. LolP catalyzes hydroxylation of the methyl group in N-methylloline (NML) and further oxygenation to N-formylloline (NFL). A plant acetyltransferase is responsible for the acetylation of loline to form N-acetylloline (NAL). LolA might interact with aspartate kinase to prevent feedback inhibition of its activity by these end products and thereby promote production of L-homoserine from L-aspartate. This Epichloe uncinata (Endophyte fungus) protein is Aspartate kinase-like protein lolA1.